The primary structure comprises 160 residues: Small ribosomal subunit protein bS6 (160 aa).

Basic and acidic residues-rich tracts occupy residues 94–119 (EEHEEGPSAMMRKADRDRERDDRGGR) and 125–152 (RGDREGRGDREGGGFRGDRGPRRPREDA). The interval 94-160 (EEHEEGPSAM…DADTAAASEE (67 aa)) is disordered.

Belongs to the bacterial ribosomal protein bS6 family.

Its function is as follows. Binds together with bS18 to 16S ribosomal RNA. This chain is Small ribosomal subunit protein bS6, found in Rhodopseudomonas palustris (strain BisB5).